A 431-amino-acid chain; its full sequence is Phosphoribosylamine--glycine ligase (431 aa).

In terms of domain architecture, ATP-grasp spans 108–315 (KDFLARHKIP…LVLLIEAALA (208 aa)). 134 to 195 (LREKGAPIVI…EEFLDGEEAS (62 aa)) contacts ATP. 2 residues coordinate Mg(2+): glutamate 285 and asparagine 287.

The protein belongs to the GARS family. Mg(2+) serves as cofactor. The cofactor is Mn(2+).

It catalyses the reaction 5-phospho-beta-D-ribosylamine + glycine + ATP = N(1)-(5-phospho-beta-D-ribosyl)glycinamide + ADP + phosphate + H(+). It functions in the pathway purine metabolism; IMP biosynthesis via de novo pathway; N(1)-(5-phospho-D-ribosyl)glycinamide from 5-phospho-alpha-D-ribose 1-diphosphate: step 2/2. The sequence is that of Phosphoribosylamine--glycine ligase from Pseudomonas syringae pv. tomato (strain ATCC BAA-871 / DC3000).